Consider the following 176-residue polypeptide: NAD(P)H-quinone oxidoreductase subunit 6, chloroplastic (176 aa).

The next 5 helical transmembrane spans lie at 10 to 30 (FLLV…VLLP), 32 to 52 (PIFS…LYIL), 61 to 81 (AQLL…VMFM), 92 to 112 (LWTV…FSLL), and 152 to 172 (FFLP…GAIS).

Belongs to the complex I subunit 6 family. NDH is composed of at least 16 different subunits, 5 of which are encoded in the nucleus.

The protein localises to the plastid. It is found in the chloroplast thylakoid membrane. It catalyses the reaction a plastoquinone + NADH + (n+1) H(+)(in) = a plastoquinol + NAD(+) + n H(+)(out). The enzyme catalyses a plastoquinone + NADPH + (n+1) H(+)(in) = a plastoquinol + NADP(+) + n H(+)(out). In terms of biological role, NDH shuttles electrons from NAD(P)H:plastoquinone, via FMN and iron-sulfur (Fe-S) centers, to quinones in the photosynthetic chain and possibly in a chloroplast respiratory chain. The immediate electron acceptor for the enzyme in this species is believed to be plastoquinone. Couples the redox reaction to proton translocation, and thus conserves the redox energy in a proton gradient. This chain is NAD(P)H-quinone oxidoreductase subunit 6, chloroplastic (ndhG), found in Lepidium virginicum (Virginia pepperweed).